Here is a 111-residue protein sequence, read N- to C-terminus: Secreted RxLR effector protein 81 (111 aa).

A signal peptide spans 1-16 (MLVSMLLIIFPNGVSL). N-linked (GlcNAc...) asparagine glycosylation is present at N52. The tract at residues 73 to 92 (KKFSSSDEDKSRDVRRRLRP) is disordered. The short motif at 88–91 (RRLR) is the RxLR-dEER element.

It belongs to the RxLR effector family.

It is found in the secreted. The protein resides in the host nucleus. The protein localises to the host cytoplasm. Functionally, secreted effector that partially suppresses the host cell death induced by cell death-inducing proteins. The sequence is that of Secreted RxLR effector protein 81 from Plasmopara viticola (Downy mildew of grapevine).